The following is a 157-amino-acid chain: 6,7-dimethyl-8-ribityllumazine synthase (157 aa).

Residues phenylalanine 22, alanine 57 to glutamate 59, and threonine 81 to isoleucine 83 contribute to the 5-amino-6-(D-ribitylamino)uracil site. Glycine 86–threonine 87 serves as a coordination point for (2S)-2-hydroxy-3-oxobutyl phosphate. Catalysis depends on histidine 89, which acts as the Proton donor. Residue phenylalanine 114 participates in 5-amino-6-(D-ribitylamino)uracil binding. Arginine 128 contributes to the (2S)-2-hydroxy-3-oxobutyl phosphate binding site.

The protein belongs to the DMRL synthase family. As to quaternary structure, forms an icosahedral capsid composed of 60 subunits, arranged as a dodecamer of pentamers.

It carries out the reaction (2S)-2-hydroxy-3-oxobutyl phosphate + 5-amino-6-(D-ribitylamino)uracil = 6,7-dimethyl-8-(1-D-ribityl)lumazine + phosphate + 2 H2O + H(+). The protein operates within cofactor biosynthesis; riboflavin biosynthesis; riboflavin from 2-hydroxy-3-oxobutyl phosphate and 5-amino-6-(D-ribitylamino)uracil: step 1/2. In terms of biological role, catalyzes the formation of 6,7-dimethyl-8-ribityllumazine by condensation of 5-amino-6-(D-ribitylamino)uracil with 3,4-dihydroxy-2-butanone 4-phosphate. This is the penultimate step in the biosynthesis of riboflavin. This chain is 6,7-dimethyl-8-ribityllumazine synthase, found in Haemophilus influenzae (strain ATCC 51907 / DSM 11121 / KW20 / Rd).